We begin with the raw amino-acid sequence, 383 residues long: V-type proton ATPase subunit C 1-A (383 aa).

The residue at position 2 (T2) is an N-acetylthreonine.

Belongs to the V-ATPase C subunit family. As to quaternary structure, V-ATPase is a heteromultimeric enzyme made up of two complexes: the ATP-hydrolytic V1 complex and the proton translocation V0 complex. The V1 complex consists of three catalytic AB heterodimers that form a heterohexamer, three peripheral stalks each consisting of EG heterodimers, one central rotor including subunits D and F, and the regulatory subunits C and H. The proton translocation complex V0 consists of the proton transport subunit a, a ring of proteolipid subunits c9c'', rotary subunit d, subunits e and f, and two accessory subunits.

Subunit of the V1 complex of vacuolar(H+)-ATPase (V-ATPase), a multisubunit enzyme composed of a peripheral complex (V1) that hydrolyzes ATP and a membrane integral complex (V0) that translocates protons. V-ATPase is responsible for acidifying and maintaining the pH of intracellular compartments and in some cell types, is targeted to the plasma membrane, where it is responsible for acidifying the extracellular environment. Subunit C is necessary for the assembly of the catalytic sector of the enzyme and is likely to have a specific function in its catalytic activity. In Danio rerio (Zebrafish), this protein is V-type proton ATPase subunit C 1-A (atp6v1c1a).